Consider the following 109-residue polypeptide: Nucleoid-associated protein LBUL_1514 (109 aa).

The protein belongs to the YbaB/EbfC family. As to quaternary structure, homodimer.

It is found in the cytoplasm. Its subcellular location is the nucleoid. Its function is as follows. Binds to DNA and alters its conformation. May be involved in regulation of gene expression, nucleoid organization and DNA protection. The protein is Nucleoid-associated protein LBUL_1514 of Lactobacillus delbrueckii subsp. bulgaricus (strain ATCC BAA-365 / Lb-18).